The primary structure comprises 269 residues: 4-chlorobenzoyl coenzyme A dehalogenase (269 aa).

Substrate contacts are provided by residues Arg-24 and 62 to 67 (AGFYLR). His-90 (proton acceptor) is an active-site residue. Gly-114 provides a ligand contact to substrate. The active-site Nucleophile is the Asp-145. Arg-257 is a substrate binding site.

This sequence belongs to the enoyl-CoA hydratase/isomerase family. In terms of assembly, homotetramer. Homotetramer, homooctamer and larger multimers. Homotrimer.

It catalyses the reaction 4-chlorobenzoyl-CoA + H2O = 4-hydroxybenzoyl-CoA + chloride + H(+). Its pathway is xenobiotic degradation; 4-chlorobenzoate degradation; 4-hydroxybenzoate from 4-chlorobenzoate: step 2/3. Its activity is regulated as follows. Inactivated by 1 mM Ag(+) and by 5 mM Cu(2+). Partially inhibited by 5 mM Zn(2+), Mn(2+), Co(2+), Fe(2+) and Ni(2+). Unaffected by 10 mM Na(+), K(+) and Li(+) and by 0.5 mM Mg(2+), Mn(2+), Fe(2+), Ca(2+), Co(2+) and Zn(2+). Inhibited by the sulfhydryl blocking agent 5,5'-dithio-bis-(2-nitrobenzoate), SDS and N-bromosuccinimide. Unaffected by sodium azide and EDTA. Inactivated following treatment with diethyl pyrocarbonate; this inactivation is reversible by treatment with hydroxylamine. Dehalogenates 4-chlorobenzoyl-CoA, 4-iodobenzoyl-CoA and 4-bromobenzoyl-CoA, but not 4-fluorobenzoyl-CoA. Inactive towards crotonyl-CoA, alpha-methylcrotonyl-CoA and beta-methylcrotonyl-CoA. This Pseudomonas sp. (strain CBS-3) protein is 4-chlorobenzoyl coenzyme A dehalogenase.